The sequence spans 102 residues: Scorpine-like-2 (102 aa).

The first 19 residues, Met1–Cys19, serve as a signal peptide directing secretion. The 40-residue stretch at Gln63 to Tyr102 folds into the BetaSPN-type CS-alpha/beta domain. Disulfide bonds link Cys66/Cys89, Cys75/Cys94, and Cys79/Cys96.

It belongs to the long chain scorpion toxin family. Class 3 subfamily. As to expression, expressed by the venom gland.

It is found in the secreted. In terms of biological role, inhibits voltage-gated potassium channels. The protein is Scorpine-like-2 of Urodacus yaschenkoi (Inland robust scorpion).